The chain runs to 401 residues: Elongation factor Tu 2 (401 aa).

In terms of domain architecture, tr-type G spans 10–209 (KPHVNVGTIG…AVDEYIPTPV (200 aa)). The G1 stretch occupies residues 19–26 (GHVDHGKT). 19–26 (GHVDHGKT) is a binding site for GTP. Mg(2+) is bound at residue threonine 26. The segment at 60 to 64 (GITIA) is G2. Positions 81–84 (DCPG) are G3. Residues 81–85 (DCPGH) and 136–139 (NKVD) contribute to the GTP site. Residues 136 to 139 (NKVD) are G4. The interval 174 to 176 (SAL) is G5.

Belongs to the TRAFAC class translation factor GTPase superfamily. Classic translation factor GTPase family. EF-Tu/EF-1A subfamily. Monomer.

The protein localises to the cytoplasm. The enzyme catalyses GTP + H2O = GDP + phosphate + H(+). Its function is as follows. GTP hydrolase that promotes the GTP-dependent binding of aminoacyl-tRNA to the A-site of ribosomes during protein biosynthesis. This chain is Elongation factor Tu 2, found in Roseiflexus sp. (strain RS-1).